The following is a 122-amino-acid chain: Large ribosomal subunit protein uL18 (122 aa).

The tract at residues 1–26 (MSNLSRKQQTQKRHRRLRRHLKGTAQ) is disordered. A compositionally biased stretch (basic residues) spans 9–22 (QTQKRHRRLRRHLK).

The protein belongs to the universal ribosomal protein uL18 family. In terms of assembly, part of the 50S ribosomal subunit; part of the 5S rRNA/L5/L18/L25 subcomplex. Contacts the 5S and 23S rRNAs.

Its function is as follows. This is one of the proteins that bind and probably mediate the attachment of the 5S RNA into the large ribosomal subunit, where it forms part of the central protuberance. In Prochlorococcus marinus (strain MIT 9313), this protein is Large ribosomal subunit protein uL18.